The sequence spans 462 residues: Integrator complex subunit 12 (462 aa).

The disordered stretch occupies residues 39-132 (LARGIDSSYR…PETRSSPITV (94 aa)). Residues 59–86 (ISSTKTVSVKQEPKTSSSLPSGNNNGKV) show a composition bias toward polar residues. Residue K68 forms a Glycyl lysine isopeptide (Lys-Gly) (interchain with G-Cter in SUMO2) linkage. The segment covering 88-125 (TTEKVKKEGEKRPADKMKSDITEGADVPKKPRLEKPET) has biased composition (basic and acidic residues). Position 128 is a phosphoserine (S128). The segment at 159-215 (GLACVVCRQMTVASGNQLVECQECHNLYHQDCHKPQVTDKEVTDPRLVWYCARCTRQ) adopts a PHD-type zinc-finger fold. K254 is covalently cross-linked (Glycyl lysine isopeptide (Lys-Gly) (interchain with G-Cter in SUMO2)). Residues 305–328 (PSTAKLSSAAQNNSGKPATSSANQ) are compositionally biased toward polar residues. A disordered region spans residues 305 to 462 (PSTAKLSSAA…KKAAQKKLKK (158 aa)). 2 stretches are compositionally biased toward low complexity: residues 347–358 (KIGSSNSTSPTV) and 382–431 (VSKV…PSAS). Over residues 434-443 (GPTSQESQLN) the composition is skewed to polar residues. Residues 449–462 (QMVKKKAAQKKLKK) show a composition bias toward basic residues.

It belongs to the Integrator subunit 12 family. As to quaternary structure, component of the Integrator complex, composed of core subunits INTS1, INTS2, INTS3, INTS4, INTS5, INTS6, INTS7, INTS8, INTS9/RC74, INTS10, INTS11/CPSF3L, INTS12, INTS13, INTS14 and INTS15. The core complex associates with protein phosphatase 2A subunits PPP2CA and PPP2R1A, to form the Integrator-PP2A (INTAC) complex. Post-translationally, dephosphorylated at Ser-128 by the PNUTS-PP1 complex, promoting RNA polymerase II transcription pause-release.

The protein localises to the nucleus. Component of the integrator complex, a multiprotein complex that terminates RNA polymerase II (Pol II) transcription in the promoter-proximal region of genes. The integrator complex provides a quality checkpoint during transcription elongation by driving premature transcription termination of transcripts that are unfavorably configured for transcriptional elongation: the complex terminates transcription by (1) catalyzing dephosphorylation of the C-terminal domain (CTD) of Pol II subunit POLR2A/RPB1 and SUPT5H/SPT5, (2) degrading the exiting nascent RNA transcript via endonuclease activity and (3) promoting the release of Pol II from bound DNA. The integrator complex is also involved in terminating the synthesis of non-coding Pol II transcripts, such as enhancer RNAs (eRNAs), small nuclear RNAs (snRNAs), telomerase RNAs and long non-coding RNAs (lncRNAs). Mediates recruitment of cytoplasmic dynein to the nuclear envelope, probably as component of the integrator complex. The sequence is that of Integrator complex subunit 12 (INTS12) from Bos taurus (Bovine).